The primary structure comprises 403 residues: F-box/kelch-repeat protein At5g39560 (403 aa).

One can recognise an F-box domain in the interval proline 26–arginine 72. Kelch repeat units follow at residues glutamate 138–glutamine 182, isoleucine 184–asparagine 229, asparagine 248–valine 294, and tyrosine 296–glycine 340.

The polypeptide is F-box/kelch-repeat protein At5g39560 (Arabidopsis thaliana (Mouse-ear cress)).